Here is a 691-residue protein sequence, read N- to C-terminus: Zinc finger protein 770 (691 aa).

Lysine 11 participates in a covalent cross-link: Glycyl lysine isopeptide (Lys-Gly) (interchain with G-Cter in SUMO2). 3 consecutive C2H2-type zinc fingers follow at residues 27 to 49 (YVCN…YLIH), 55 to 77 (FECD…QLTH), and 81 to 103 (FKCS…QQLH). Residues lysine 112, lysine 121, and lysine 146 each participate in a glycyl lysine isopeptide (Lys-Gly) (interchain with G-Cter in SUMO2) cross-link. 3 C2H2-type zinc fingers span residues 160-182 (HACT…VLIH), 188-210 (FKCV…QLTH), and 216-238 (FQCC…KQIH). Residues 258–277 (PLPNKLNANQGGFENGEIGE) are disordered. Lysine 262 is covalently cross-linked (Glycyl lysine isopeptide (Lys-Gly) (interchain with G-Cter in SUMO2)). The C2H2-type 7; degenerate zinc-finger motif lies at 294-318 (FQCPKCEKCFESEQILNEHSCFAAR). Residues lysine 420 and lysine 437 each participate in a glycyl lysine isopeptide (Lys-Gly) (interchain with G-Cter in SUMO2) cross-link. C2H2-type zinc fingers lie at residues 475-497 (CPCD…YLIH), 503-525 (FGCN…EQTH), 625-647 (YRCS…YLIH), and 653-675 (FECS…QLTH). Lysine 683 participates in a covalent cross-link: Glycyl lysine isopeptide (Lys-Gly) (interchain with G-Cter in SUMO2).

Belongs to the krueppel C2H2-type zinc-finger protein family.

The protein resides in the nucleus. In terms of biological role, may be involved in transcriptional regulation. The chain is Zinc finger protein 770 (ZNF770) from Homo sapiens (Human).